A 54-amino-acid polypeptide reads, in one-letter code: Ovomucoid (54 aa).

In terms of domain architecture, Kazal-like spans 4–54 (VDCSDYPKPACLLEYMPLCGSDNKTYDNKCSFCNAVVDSNGTLSLSHFGKC). 3 disulfides stabilise this stretch: cysteine 6–cysteine 36, cysteine 14–cysteine 33, and cysteine 22–cysteine 54. The N-linked (GlcNAc...) asparagine glycan is linked to asparagine 43.

The protein resides in the secreted. This is Ovomucoid from Opisthocomus hoazin (Hoatzin).